Reading from the N-terminus, the 136-residue chain is Glutaredoxin-C8 (136 aa).

In terms of domain architecture, Glutaredoxin spans 33–135; it reads SSFVKSTVKA…KLLNIDVKED (103 aa). A disulfide bridge connects residues C53 and C56.

It belongs to the glutaredoxin family. CPYC subfamily.

It is found in the cytoplasm. Functionally, has a glutathione-disulfide oxidoreductase activity in the presence of NADPH and glutathione reductase. Reduces low molecular weight disulfides and proteins. The protein is Glutaredoxin-C8 (GRXC8) of Oryza sativa subsp. japonica (Rice).